A 159-amino-acid polypeptide reads, in one-letter code: Testis-specific XK-related protein, Y-linked (159 aa).

3 helical membrane passes run 1–21 (MFIF…VGAI), 45–65 (IYLM…LAFF), and 72–92 (GSLH…WLEF).

This sequence belongs to the XK family. As to expression, testis specific.

The protein localises to the membrane. This is Testis-specific XK-related protein, Y-linked (XKRY) from Homo sapiens (Human).